Consider the following 225-residue polypeptide: NAD(P)H-quinone oxidoreductase subunit K, chloroplastic (225 aa).

Residues C43, C44, C108, and C139 each coordinate [4Fe-4S] cluster.

Belongs to the complex I 20 kDa subunit family. As to quaternary structure, NDH is composed of at least 16 different subunits, 5 of which are encoded in the nucleus. The cofactor is [4Fe-4S] cluster.

The protein resides in the plastid. It is found in the chloroplast thylakoid membrane. The enzyme catalyses a plastoquinone + NADH + (n+1) H(+)(in) = a plastoquinol + NAD(+) + n H(+)(out). It catalyses the reaction a plastoquinone + NADPH + (n+1) H(+)(in) = a plastoquinol + NADP(+) + n H(+)(out). NDH shuttles electrons from NAD(P)H:plastoquinone, via FMN and iron-sulfur (Fe-S) centers, to quinones in the photosynthetic chain and possibly in a chloroplast respiratory chain. The immediate electron acceptor for the enzyme in this species is believed to be plastoquinone. Couples the redox reaction to proton translocation, and thus conserves the redox energy in a proton gradient. The chain is NAD(P)H-quinone oxidoreductase subunit K, chloroplastic from Eucalyptus globulus subsp. globulus (Tasmanian blue gum).